The sequence spans 432 residues: Enolase 1 (432 aa).

Gln-163 serves as a coordination point for (2R)-2-phosphoglycerate. Catalysis depends on Glu-205, which acts as the Proton donor. Residues Asp-242, Glu-287, and Asp-314 each contribute to the Mg(2+) site. Residues Lys-339, Arg-368, Ser-369, and Lys-390 each coordinate (2R)-2-phosphoglycerate. Lys-339 serves as the catalytic Proton acceptor.

This sequence belongs to the enolase family. Requires Mg(2+) as cofactor.

It localises to the cytoplasm. The protein resides in the secreted. The protein localises to the cell surface. It carries out the reaction (2R)-2-phosphoglycerate = phosphoenolpyruvate + H2O. Its pathway is carbohydrate degradation; glycolysis; pyruvate from D-glyceraldehyde 3-phosphate: step 4/5. Functionally, catalyzes the reversible conversion of 2-phosphoglycerate (2-PG) into phosphoenolpyruvate (PEP). It is essential for the degradation of carbohydrates via glycolysis. In Lactobacillus johnsonii (strain CNCM I-12250 / La1 / NCC 533), this protein is Enolase 1.